Here is a 392-residue protein sequence, read N- to C-terminus: MLTIGTALRADATRVMLLGSGELGKEVAIECQRLGIEVIAVDRYADAPAMQIAHRSHVINMLDGDALKALVEAERPDYIVPEIEAIATDMLVTLEKQGHHVVPCAEATRLTMNREGIRRLAAETLGVPTSTYRFADSEESFRQAVEAIGYPCIVKPVMSSSGKGQSLIRSAEQLDKAWNYAQQGGRAGGGRVIVEGLVNFDFEITLLTVHAVDGIHFCAPIGHRQEDGDYRESWQPQQMSALAQERAQKMASDVVKALGGYGLFGVELFVCGDEVIFSEVSPRPHDTGMVTMISQDLSEFALHVRAFLGLPIGAVRQYGASASAVILPELESNNVRYQGLESALLPHTQIRLFGKPDIGGKRRMGVALASAETTEDAVEIAKRVAAGVTVSG.

Residues 22-23 (EL) and Glu82 contribute to the N(1)-(5-phospho-beta-D-ribosyl)glycinamide site. ATP contacts are provided by residues Arg114, Lys155, 160–165 (SSGKGQ), 195–198 (EGLV), and Glu203. The region spanning 119-308 (RLAAETLGVP…EFALHVRAFL (190 aa)) is the ATP-grasp domain. Positions 267 and 279 each coordinate Mg(2+). Residues Asp286, Lys355, and 362–363 (RR) each bind N(1)-(5-phospho-beta-D-ribosyl)glycinamide.

The protein belongs to the PurK/PurT family. As to quaternary structure, homodimer.

The catalysed reaction is N(1)-(5-phospho-beta-D-ribosyl)glycinamide + formate + ATP = N(2)-formyl-N(1)-(5-phospho-beta-D-ribosyl)glycinamide + ADP + phosphate + H(+). The protein operates within purine metabolism; IMP biosynthesis via de novo pathway; N(2)-formyl-N(1)-(5-phospho-D-ribosyl)glycinamide from N(1)-(5-phospho-D-ribosyl)glycinamide (formate route): step 1/1. In terms of biological role, involved in the de novo purine biosynthesis. Catalyzes the transfer of formate to 5-phospho-ribosyl-glycinamide (GAR), producing 5-phospho-ribosyl-N-formylglycinamide (FGAR). Formate is provided by PurU via hydrolysis of 10-formyl-tetrahydrofolate. This is Formate-dependent phosphoribosylglycinamide formyltransferase from Pectobacterium carotovorum subsp. carotovorum (strain PC1).